A 575-amino-acid chain; its full sequence is Flagellin A (575 aa).

Repeat copies occupy residues 405–409 (GSGFS), 411–415 (GSGFS), and 447–450 (GSGF).

Belongs to the bacterial flagellin family. Heteromer of flaA and flaB.

The protein localises to the secreted. It is found in the bacterial flagellum. In terms of biological role, flagellin is the subunit protein which polymerizes to form the filaments of bacterial flagella. The chain is Flagellin A (flaA) from Campylobacter jejuni.